Consider the following 275-residue polypeptide: Phosphonoacetaldehyde hydrolase (275 aa).

The active-site Nucleophile is the Asp-15. 2 residues coordinate Mg(2+): Asp-15 and Ala-17. Lys-56 serves as the catalytic Schiff-base intermediate with substrate. Asp-189 contributes to the Mg(2+) binding site.

It belongs to the HAD-like hydrolase superfamily. PhnX family. As to quaternary structure, homodimer. It depends on Mg(2+) as a cofactor.

The enzyme catalyses phosphonoacetaldehyde + H2O = acetaldehyde + phosphate + H(+). Functionally, involved in phosphonate degradation. This is Phosphonoacetaldehyde hydrolase from Pseudomonas putida (Arthrobacter siderocapsulatus).